The primary structure comprises 189 residues: Interferon alpha-17 (189 aa).

The signal sequence occupies residues 1–23 (MALSFSLLMAVLVLSYKSICSLG). Disulfide bonds link cysteine 24–cysteine 122 and cysteine 52–cysteine 162.

Belongs to the alpha/beta interferon family.

The protein resides in the secreted. Produced by macrophages, IFN-alpha have antiviral activities. Interferon stimulates the production of two enzymes: a protein kinase and an oligoadenylate synthetase. This is Interferon alpha-17 (IFNA17) from Homo sapiens (Human).